The chain runs to 301 residues: Protease HtpX (301 aa).

Transmembrane regions (helical) follow at residues 4–24 (IGLFLLTNLAVLVVAGIILSL) and 38–58 (LGNLLVICFVFGMVGSLVSLF). His147 contributes to the Zn(2+) binding site. Residue Glu148 is part of the active site. His151 is a binding site for Zn(2+). Helical transmembrane passes span 155-175 (GDMVTLALIQGVVNAFVMFFA) and 200-220 (FIITMVLDIVFGILASAIVMW). Glu226 contacts Zn(2+).

The protein belongs to the peptidase M48B family. It depends on Zn(2+) as a cofactor.

The protein resides in the cell inner membrane. This is Protease HtpX from Acinetobacter baumannii (strain AB307-0294).